The chain runs to 294 residues: Shell matrix protein (294 aa).

As to expression, component of the organic matrix of calcified shell layers like nacre and prisms.

It is found in the secreted. The protein is Shell matrix protein of Mytilus californianus (California mussel).